The sequence spans 79 residues: Acyl carrier protein (79 aa).

Positions 4–79 (AEIKDKVYDI…QAIDYIVNKK (76 aa)) constitute a Carrier domain. The residue at position 39 (Ser-39) is an O-(pantetheine 4'-phosphoryl)serine.

The protein belongs to the acyl carrier protein (ACP) family. 4'-phosphopantetheine is transferred from CoA to a specific serine of apo-ACP by AcpS. This modification is essential for activity because fatty acids are bound in thioester linkage to the sulfhydryl of the prosthetic group.

The protein resides in the cytoplasm. The protein operates within lipid metabolism; fatty acid biosynthesis. Carrier of the growing fatty acid chain in fatty acid biosynthesis. The sequence is that of Acyl carrier protein from Pelodictyon phaeoclathratiforme (strain DSM 5477 / BU-1).